Reading from the N-terminus, the 158-residue chain is NAD(P)H-quinone oxidoreductase subunit J, chloroplastic (158 aa).

This sequence belongs to the complex I 30 kDa subunit family. In terms of assembly, NDH is composed of at least 16 different subunits, 5 of which are encoded in the nucleus.

Its subcellular location is the plastid. The protein resides in the chloroplast thylakoid membrane. It carries out the reaction a plastoquinone + NADH + (n+1) H(+)(in) = a plastoquinol + NAD(+) + n H(+)(out). It catalyses the reaction a plastoquinone + NADPH + (n+1) H(+)(in) = a plastoquinol + NADP(+) + n H(+)(out). In terms of biological role, NDH shuttles electrons from NAD(P)H:plastoquinone, via FMN and iron-sulfur (Fe-S) centers, to quinones in the photosynthetic chain and possibly in a chloroplast respiratory chain. The immediate electron acceptor for the enzyme in this species is believed to be plastoquinone. Couples the redox reaction to proton translocation, and thus conserves the redox energy in a proton gradient. This is NAD(P)H-quinone oxidoreductase subunit J, chloroplastic from Olimarabidopsis pumila (Dwarf rocket).